The primary structure comprises 344 residues: Anamorsin homolog 1 (344 aa).

The segment at 1-169 is N-terminal SAM-like domain; it reads MANNVGVLLA…DTGSVFQIRK (169 aa). The tract at residues 170 to 233 is linker; sequence KVSNQNGNFR…EDDLLTEEDL (64 aa). [2Fe-2S] cluster is bound by residues Cys244, Cys251, Cys254, and Cys256. Residues 244–256 form a fe-S binding site A region; the sequence is CAPTKKACKNCTC. Positions 282, 285, 293, and 296 each coordinate [4Fe-4S] cluster. Short sequence motifs (cx2C motif) lie at residues 282–285 and 293–296; these read CGSC and CAGC. The interval 282–296 is fe-S binding site B; sequence CGSCGLGDAFRCAGC.

This sequence belongs to the anamorsin family. As to quaternary structure, monomer. Requires [2Fe-2S] cluster as cofactor. [4Fe-4S] cluster serves as cofactor.

It is found in the cytoplasm. The protein localises to the mitochondrion intermembrane space. Functionally, component of the cytosolic iron-sulfur (Fe-S) protein assembly (CIA) machinery. Required for the maturation of extramitochondrial Fe-S proteins. Part of an electron transfer chain functioning in an early step of cytosolic Fe-S biogenesis, facilitating the de novo assembly of a [4Fe-4S] cluster on the cytosolic Fe-S scaffold complex. Electrons are transferred from NADPH via a FAD- and FMN-containing diflavin oxidoreductase. Together with the diflavin oxidoreductase, also required for the assembly of the diferric tyrosyl radical cofactor of ribonucleotide reductase (RNR), probably by providing electrons for reduction during radical cofactor maturation in the catalytic small subunit. The sequence is that of Anamorsin homolog 1 from Physcomitrium patens (Spreading-leaved earth moss).